Consider the following 225-residue polypeptide: UPF0758 protein Ping_0056 (225 aa).

The MPN domain occupies 103 to 225; that stretch reads ALTSAAQTKA…CTSFAENGWI (123 aa). Zn(2+) contacts are provided by H174, H176, and D187. Positions 174 to 187 match the JAMM motif motif; sequence HNHPSGDPSASEAD.

The protein belongs to the UPF0758 family.

In Psychromonas ingrahamii (strain DSM 17664 / CCUG 51855 / 37), this protein is UPF0758 protein Ping_0056.